We begin with the raw amino-acid sequence, 312 residues long: Ankyrin repeat family A protein 2 (312 aa).

ANK repeat units follow at residues 147–179, 180–212, 213–245, 246–278, and 279–312; these read ANSL…HTDE, EGFT…LLGK, GRES…EYDW, NGGT…IETD, and SGYN…NIRE.

In terms of assembly, interacts (via ANK repeats) with CCDC8 (via PxLPxI/L motif); mediates the interaction with the 3M complex which is composed of CCDC8, CUL7 and OBSL1. Interacts (via ANK repeats) with HDAC4 (via PxLPxI/L motif). Interacts (via ANK repeats) with HDAC5 (via PxLPxI/L motif). Interacts (via ANK repeats) with LRP2/megalin (via PxLPxI/L motif). Interacts (via ANK repeats) with RFX7 (via PxLPxI/L motif). Interacts with AHRR. Interacts with NEK6.

It is found in the cytoplasm. The protein resides in the cytoskeleton. The protein localises to the membrane. Functionally, may regulate the interaction between the 3M complex and the histone deacetylases HDAC4 and HDAC5. May also regulate LRP2/megalin. The chain is Ankyrin repeat family A protein 2 (Ankra2) from Mus musculus (Mouse).